The primary structure comprises 760 residues: Leucine-rich repeat extensin-like protein 3 (760 aa).

Residues Met1–Ala20 form the signal peptide. The N-linked (GlcNAc...) asparagine glycan is linked to Asn16. An LRR 1 repeat occupies Leu21–Glu45. Residues Asn86 and Asn98 are each glycosylated (N-linked (GlcNAc...) asparagine). 9 LRR repeats span residues Ile113–Leu137, Ser138–Arg160, Leu161–Leu185, Pro186–Lys209, Leu211–Ser232, Val234–Met255, Lys256–Leu279, Asn281–Met303, and Val304–Leu327. Asn281 carries an N-linked (GlcNAc...) asparagine glycan. N-linked (GlcNAc...) asparagine glycosylation occurs at Asn332. 3 disordered regions span residues Gly389–Pro502, Pro515–Pro610, and Pro663–Gly748. Pro residues-rich tracts occupy residues Pro394–Pro415 and Leu423–Pro502. Positions Ser409 to Pro758 are contains the Ser-Pro(4) repeats. Pro residues predominate over residues Pro663 to Pro745.

In terms of assembly, interacts with SH3P1. Post-translationally, hydroxylated on proline residues in the S-P-P-P-P repeat. In terms of processing, O-glycosylated on hydroxyprolines. As to expression, expressed in roots, stems, leaves and flowers, mostly in vascular tissues.

It is found in the secreted. Its subcellular location is the cell wall. Functionally, modulates cell morphogenesis by regulating cell wall formation and assembly, and/or growth polarization. The sequence is that of Leucine-rich repeat extensin-like protein 3 (LRX3) from Arabidopsis thaliana (Mouse-ear cress).